We begin with the raw amino-acid sequence, 192 residues long: MTSALVLLGYLAGSIPFGVLLTRWLRGVDVRTGGSGNIGATNVTRVAGKKLGAVVLLLDAIKGALPVVLAVRLLPDAPTVHVAVGLAAVLGHIYPVWLKLQGGKGVATALGVLLVLVPQAALAAALVYVAVFAVSRVSSLGSLAAGATAVGTSALTARAVEYAGLSALLFALMLWTHRGNILRLARRTERRF.

Helical transmembrane passes span 1 to 21, 51 to 71, 78 to 98, 112 to 132, and 155 to 175; these read MTSA…GVLL, LGAV…VLAV, PTVH…PVWL, VLLV…VAVF, and LTAR…LMLW.

It belongs to the PlsY family. Probably interacts with PlsX.

It is found in the cell inner membrane. It carries out the reaction an acyl phosphate + sn-glycerol 3-phosphate = a 1-acyl-sn-glycero-3-phosphate + phosphate. It functions in the pathway lipid metabolism; phospholipid metabolism. Functionally, catalyzes the transfer of an acyl group from acyl-phosphate (acyl-PO(4)) to glycerol-3-phosphate (G3P) to form lysophosphatidic acid (LPA). This enzyme utilizes acyl-phosphate as fatty acyl donor, but not acyl-CoA or acyl-ACP. This Myxococcus xanthus (strain DK1622) protein is Glycerol-3-phosphate acyltransferase.